Consider the following 72-residue polypeptide: Translation initiation factor IF-1 (72 aa).

Positions 1–72 constitute an S1-like domain; sequence MAKEELLEFP…TKGRITYRFK (72 aa).

It belongs to the IF-1 family. As to quaternary structure, component of the 30S ribosomal translation pre-initiation complex which assembles on the 30S ribosome in the order IF-2 and IF-3, IF-1 and N-formylmethionyl-tRNA(fMet); mRNA recruitment can occur at any time during PIC assembly.

The protein localises to the cytoplasm. Its function is as follows. One of the essential components for the initiation of protein synthesis. Stabilizes the binding of IF-2 and IF-3 on the 30S subunit to which N-formylmethionyl-tRNA(fMet) subsequently binds. Helps modulate mRNA selection, yielding the 30S pre-initiation complex (PIC). Upon addition of the 50S ribosomal subunit IF-1, IF-2 and IF-3 are released leaving the mature 70S translation initiation complex. This chain is Translation initiation factor IF-1, found in Caulobacter vibrioides (strain ATCC 19089 / CIP 103742 / CB 15) (Caulobacter crescentus).